Here is a 637-residue protein sequence, read N- to C-terminus: 3D-(3,5/4)-trihydroxycyclohexane-1,2-dione hydrolase (637 aa).

Residue Glu-65 coordinates thiamine diphosphate. A thiamine pyrophosphate binding region spans residues 441–521; the sequence is SLPGDLQRLW…INVLLFDNSG (81 aa). Asp-492 and Asn-519 together coordinate Mg(2+).

Belongs to the TPP enzyme family. Mg(2+) serves as cofactor. It depends on thiamine diphosphate as a cofactor.

The catalysed reaction is 3D-3,5/4-trihydroxycyclohexane-1,2-dione + H2O = 5-deoxy-D-glucuronate + H(+). It participates in polyol metabolism; myo-inositol degradation into acetyl-CoA; acetyl-CoA from myo-inositol: step 3/7. Involved in the cleavage of the C1-C2 bond of 3D-(3,5/4)-trihydroxycyclohexane-1,2-dione (THcHDO) to yield 5-deoxy-glucuronate (5DG). This is 3D-(3,5/4)-trihydroxycyclohexane-1,2-dione hydrolase from Halalkalibacterium halodurans (strain ATCC BAA-125 / DSM 18197 / FERM 7344 / JCM 9153 / C-125) (Bacillus halodurans).